The following is a 404-amino-acid chain: Ammonium transporter (404 aa).

9 helical membrane-spanning segments follow: residues 7-27 (VFMF…ALFY), 44-64 (FSSI…LAFA), 96-116 (LFMM…SGAF), 125-145 (FLLF…HWVW), 158-178 (FAGG…LAIV), 227-247 (INTN…EWII), 254-274 (LGAV…AGFV), 277-297 (FASI…VFSL), and 352-372 (IVAI…IIKI).

It belongs to the ammonia transporter channel (TC 1.A.11.2) family. As to quaternary structure, interacts with NrgB for a correct localization of the latter. GlnK-AmtB complex interacts with TnrA.

The protein localises to the cell membrane. Its function is as follows. Functions as an ammonium and methylammonium transporter in the absence of glutamine. Required for ammonium utilization at low concentrations or at low pH values, when ammonium is the single nitrogen source. Required for binding of NrgB to the membrane. Interaction between GlnK-AmtB complex and TnrA protects TnrA from proteolytic degradation. The sequence is that of Ammonium transporter from Bacillus subtilis (strain 168).